The sequence spans 295 residues: Protoheme IX farnesyltransferase (295 aa).

Transmembrane regions (helical) follow at residues 8-28, 35-55, 84-104, 107-127, 132-152, 162-182, 208-228, 233-253, and 264-284; these read VTKP…FLLA, YTLF…GCVF, VSLV…WFGA, LACW…SLYM, VYGT…GYCA, LILL…IAIF, ITLY…GGYA, LVVA…GYKV, and FVFS…DFMV.

The protein belongs to the UbiA prenyltransferase family. Protoheme IX farnesyltransferase subfamily.

Its subcellular location is the cell inner membrane. It catalyses the reaction heme b + (2E,6E)-farnesyl diphosphate + H2O = Fe(II)-heme o + diphosphate. It functions in the pathway porphyrin-containing compound metabolism; heme O biosynthesis; heme O from protoheme: step 1/1. In terms of biological role, converts heme B (protoheme IX) to heme O by substitution of the vinyl group on carbon 2 of heme B porphyrin ring with a hydroxyethyl farnesyl side group. In Enterobacter sp. (strain 638), this protein is Protoheme IX farnesyltransferase.